The chain runs to 263 residues: Large ribosomal subunit protein uL29m (263 aa).

Disordered stretches follow at residues 51–92 and 208–263; these read ARVT…EELP and PEID…APRV. The span at 53–66 shows a compositional bias: basic and acidic residues; that stretch reads VTRDNSKQRGESAL. Positions 214-223 are enriched in polar residues; the sequence is NPENPYTPST. Positions 233–245 are enriched in low complexity; that stretch reads GAEASETQSTTTE. Residues 246 to 257 show a composition bias toward polar residues; the sequence is IDPTTIPSSKSQ.

Belongs to the universal ribosomal protein uL29 family. As to quaternary structure, component of the mitochondrial large ribosomal subunit (mt-LSU). Mature N.crassa 74S mitochondrial ribosomes consist of a small (37S) and a large (54S) subunit. The 37S small subunit contains a 16S ribosomal RNA (16S mt-rRNA) and 32 different proteins. The 54S large subunit contains a 23S rRNA (23S mt-rRNA) and 42 different proteins.

The protein resides in the mitochondrion. Functionally, component of the mitochondrial ribosome (mitoribosome), a dedicated translation machinery responsible for the synthesis of mitochondrial genome-encoded proteins, including at least some of the essential transmembrane subunits of the mitochondrial respiratory chain. The mitoribosomes are attached to the mitochondrial inner membrane and translation products are cotranslationally integrated into the membrane. This Neurospora crassa (strain ATCC 24698 / 74-OR23-1A / CBS 708.71 / DSM 1257 / FGSC 987) protein is Large ribosomal subunit protein uL29m (mrpl4).